The following is a 282-amino-acid chain: Glucuronoxylan 4-O-methyltransferase 1 (282 aa).

The helical transmembrane segment at V13–T33 threads the bilayer.

It belongs to the methyltransferase superfamily. In terms of tissue distribution, expressed in rosette leaves, stems, flowers and siliques.

The protein resides in the golgi apparatus membrane. It carries out the reaction glucuronoxylan D-glucuronate + n S-adenosyl-L-methionine = glucuronoxylan 4-O-methyl-D-glucuronate + n S-adenosyl-L-homocysteine + n H(+). In terms of biological role, methyltransferase catalyzing 4-O-methylation of glucuronic acid side chains on xylan. This Arabidopsis thaliana (Mouse-ear cress) protein is Glucuronoxylan 4-O-methyltransferase 1 (GXM1).